Reading from the N-terminus, the 435-residue chain is ATP-dependent protease ATPase subunit HslU (435 aa).

ATP contacts are provided by residues V18, 60–65 (GCGKTE), D248, E313, and R385.

It belongs to the ClpX chaperone family. HslU subfamily. In terms of assembly, a double ring-shaped homohexamer of HslV is capped on each side by a ring-shaped HslU homohexamer. The assembly of the HslU/HslV complex is dependent on binding of ATP.

It is found in the cytoplasm. Its function is as follows. ATPase subunit of a proteasome-like degradation complex; this subunit has chaperone activity. The binding of ATP and its subsequent hydrolysis by HslU are essential for unfolding of protein substrates subsequently hydrolyzed by HslV. HslU recognizes the N-terminal part of its protein substrates and unfolds these before they are guided to HslV for hydrolysis. The chain is ATP-dependent protease ATPase subunit HslU from Beijerinckia indica subsp. indica (strain ATCC 9039 / DSM 1715 / NCIMB 8712).